The sequence spans 491 residues: Stromelysin-3 (491 aa).

The N-terminal stretch at 1 to 35 (MARAACLLRAISRALLLPLPLLLLLLLLLPPQLMA) is a signal peptide. Residues 36-101 (RARPPENHRH…VLNARNRQKR (66 aa)) constitute a propeptide, activation peptide. A Cysteine switch motif is present at residues 82–89 (LRCGVPDP). Residues C84, H168, and D170 each coordinate Zn(2+). D175, G176, G178, and I180 together coordinate Ca(2+). Positions 183, 196, and 218 each coordinate Zn(2+). The active site involves E219. Positions 222 and 228 each coordinate Zn(2+). The interval 260–279 (YGRPQLTPTSPTPTLSSQAG) is disordered. Positions 263–277 (PQLTPTSPTPTLSSQ) are enriched in low complexity. C297 and C483 are disulfide-bonded. 4 Hemopexin repeats span residues 298–342 (ETSF…WQGL), 343–385 (PSPV…KLGL), 387–435 (GSPV…WRGV), and 436–483 (PSEI…FFDC).

Belongs to the peptidase M10A family. The cofactor is Ca(2+). Zn(2+) is required as a cofactor. In terms of processing, the precursor is cleaved by a furin endopeptidase. Highly expressed in ovary and uterus.

The protein localises to the secreted. It localises to the extracellular space. The protein resides in the extracellular matrix. In terms of biological role, may play an important role in the progression of epithelial malignancies. The chain is Stromelysin-3 (Mmp11) from Rattus norvegicus (Rat).